A 211-amino-acid chain; its full sequence is Protein-L-isoaspartate O-methyltransferase (211 aa).

Serine 62 is a catalytic residue.

It belongs to the methyltransferase superfamily. L-isoaspartyl/D-aspartyl protein methyltransferase family.

The protein resides in the cytoplasm. The catalysed reaction is [protein]-L-isoaspartate + S-adenosyl-L-methionine = [protein]-L-isoaspartate alpha-methyl ester + S-adenosyl-L-homocysteine. Catalyzes the methyl esterification of L-isoaspartyl residues in peptides and proteins that result from spontaneous decomposition of normal L-aspartyl and L-asparaginyl residues. It plays a role in the repair and/or degradation of damaged proteins. The protein is Protein-L-isoaspartate O-methyltransferase of Shewanella oneidensis (strain ATCC 700550 / JCM 31522 / CIP 106686 / LMG 19005 / NCIMB 14063 / MR-1).